The chain runs to 441 residues: Ribulose bisphosphate carboxylase large chain (441 aa).

Substrate is bound by residues asparagine 89 and threonine 139. Lysine 141 (proton acceptor) is an active-site residue. A substrate-binding site is contributed by lysine 143. The Mg(2+) site is built by lysine 167, aspartate 169, and glutamate 170. N6-carboxylysine is present on lysine 167. Histidine 260 (proton acceptor) is an active-site residue. Arginine 261, histidine 293, and serine 345 together coordinate substrate.

It belongs to the RuBisCO large chain family. Type I subfamily. In terms of assembly, heterohexadecamer of 8 large chains and 8 small chains; disulfide-linked. The disulfide link is formed within the large subunit homodimers. It depends on Mg(2+) as a cofactor. The disulfide bond which can form in the large chain dimeric partners within the hexadecamer appears to be associated with oxidative stress and protein turnover.

It is found in the plastid. The protein resides in the chloroplast. The enzyme catalyses 2 (2R)-3-phosphoglycerate + 2 H(+) = D-ribulose 1,5-bisphosphate + CO2 + H2O. It carries out the reaction D-ribulose 1,5-bisphosphate + O2 = 2-phosphoglycolate + (2R)-3-phosphoglycerate + 2 H(+). RuBisCO catalyzes two reactions: the carboxylation of D-ribulose 1,5-bisphosphate, the primary event in carbon dioxide fixation, as well as the oxidative fragmentation of the pentose substrate in the photorespiration process. Both reactions occur simultaneously and in competition at the same active site. This is Ribulose bisphosphate carboxylase large chain from Coriandrum sativum (Coriander).